The following is a 102-amino-acid chain: Small ubiquitin-related modifier 1-A (102 aa).

The tract at residues methionine 1–glycine 20 is disordered. In terms of domain architecture, Ubiquitin-like spans aspartate 21 to glycine 98. Residue glycine 98 forms a Glycyl lysine isopeptide (Gly-Lys) (interchain with K-? in acceptor proteins) linkage. Positions histidine 99–phenylalanine 102 are excised as a propeptide.

Belongs to the ubiquitin family. SUMO subfamily. In terms of assembly, interacts with sae2, ube2i, ranbp2, pias1 and pias2. Covalently attached to a number of proteins including rangap1 and ranbp2. Interacts with sox9 and sox10. In terms of processing, cleavage of precursor form by a sentrin-specific protease is necessary for function.

The protein localises to the nucleus membrane. It is found in the nucleus speckle. Its subcellular location is the cytoplasm. The protein resides in the nucleus. It localises to the PML body. The protein localises to the cell membrane. Functionally, ubiquitin-like protein that can be covalently attached to proteins as a monomer or a lysine-linked polymer. Covalent attachment via an isopeptide bond to its substrates requires prior activation by the E1 complex sae1-sae2 and linkage to the E2 enzyme ube2i. This post-translational modification on lysine residues of proteins plays a crucial role in a number of cellular processes such as nuclear transport, DNA replication and repair, mitosis and signal transduction. Polymeric sumo1 chains are also susceptible to polyubiquitination which functions as a signal for proteasomal degradation of modified proteins. This is Small ubiquitin-related modifier 1-A (sumo1-a) from Xenopus laevis (African clawed frog).